The following is an 883-amino-acid chain: Translation initiation factor IF-2 (883 aa).

Positions 118-261 are disordered; that stretch reads VARESEAAPA…KKKEAFKKTE (144 aa). The span at 124–150 shows a compositional bias: low complexity; sequence AAPAEEPVAAAVKPASEPPVVQKAPVA. Basic and acidic residues-rich tracts occupy residues 183–200 and 252–261; these read PADR…EERI and KKKEAFKKTE. The 170-residue stretch at 383–552 folds into the tr-type G domain; the sequence is KRPPVVTIMG…LLQADVMDLK (170 aa). The segment at 392 to 399 is G1; it reads GHVDHGKT. 392–399 provides a ligand contact to GTP; it reads GHVDHGKT. Residues 417 to 421 are G2; it reads GITQH. The G3 stretch occupies residues 438-441; that stretch reads DTPG. Residues 438-442 and 492-495 contribute to the GTP site; these read DTPGH and NKID. The segment at 492-495 is G4; the sequence is NKID. The segment at 528 to 530 is G5; the sequence is SAK.

The protein belongs to the TRAFAC class translation factor GTPase superfamily. Classic translation factor GTPase family. IF-2 subfamily.

It is found in the cytoplasm. In terms of biological role, one of the essential components for the initiation of protein synthesis. Protects formylmethionyl-tRNA from spontaneous hydrolysis and promotes its binding to the 30S ribosomal subunits. Also involved in the hydrolysis of GTP during the formation of the 70S ribosomal complex. This chain is Translation initiation factor IF-2, found in Geobacter sulfurreducens (strain ATCC 51573 / DSM 12127 / PCA).